The chain runs to 147 residues: Lysozyme C (147 aa).

The first 18 residues, 1-18, serve as a signal peptide directing secretion; that stretch reads MKVLLLLGFIFCSMAAHG. Positions 19 to 147 constitute a C-type lysozyme domain; the sequence is KRMERCEFAR…LSKYLEGCHL (129 aa). Cystine bridges form between cysteine 24–cysteine 145, cysteine 48–cysteine 133, cysteine 83–cysteine 99, and cysteine 95–cysteine 113. Catalysis depends on residues glutamate 53 and aspartate 71.

The protein belongs to the glycosyl hydrolase 22 family. Monomer.

The protein resides in the secreted. It carries out the reaction Hydrolysis of (1-&gt;4)-beta-linkages between N-acetylmuramic acid and N-acetyl-D-glucosamine residues in a peptidoglycan and between N-acetyl-D-glucosamine residues in chitodextrins.. Its function is as follows. Lysozymes have primarily a bacteriolytic function; those in tissues and body fluids are associated with the monocyte-macrophage system and enhance the activity of immunoagents. This is Lysozyme C (LYZ) from Trichosurus vulpecula (Brush-tailed possum).